Reading from the N-terminus, the 208-residue chain is N-(5'-phosphoribosyl)anthranilate isomerase (208 aa).

This sequence belongs to the TrpF family.

The enzyme catalyses N-(5-phospho-beta-D-ribosyl)anthranilate = 1-(2-carboxyphenylamino)-1-deoxy-D-ribulose 5-phosphate. The protein operates within amino-acid biosynthesis; L-tryptophan biosynthesis; L-tryptophan from chorismate: step 3/5. This is N-(5'-phosphoribosyl)anthranilate isomerase from Staphylococcus haemolyticus (strain JCSC1435).